The chain runs to 130 residues: C-C motif chemokine 28 (130 aa).

Positions 1–16 (MQQAGLTLMAVAVCVA) are cleaved as a signal peptide. 2 disulfide bridges follow: C30/C58 and C31/C73. A glycan (N-linked (GlcNAc...) asparagine) is linked at N78. Positions 92 to 130 (KNGRENVCSGKKQPSRKDRKGHTTRKHRTRGTHRHEASR) are disordered. Over residues 104–124 (QPSRKDRKGHTTRKHRTRGTH) the composition is skewed to basic residues.

It belongs to the intercrine beta (chemokine CC) family. In terms of tissue distribution, mainly expressed in testis, epithelial cells of normal colon, kidney, Peyer patches, lymph nodes. Also found in lower levels in brain, spleen and lung.

The protein localises to the secreted. Its function is as follows. Chemotactic for resting CD4, CD8 T-cells and eosinophils. Binds to CCR10 and induces calcium mobilization in a dose-dependent manner. In Mus musculus (Mouse), this protein is C-C motif chemokine 28 (Ccl28).